The primary structure comprises 87 residues: Small ribosomal subunit protein uS15c (87 aa).

Positions 1 to 20 are disordered; that stretch reads MNQNLSIRKRNKLKQDSGSP.

This sequence belongs to the universal ribosomal protein uS15 family. As to quaternary structure, part of the 30S ribosomal subunit.

The protein resides in the plastid. The protein localises to the chloroplast. The protein is Small ribosomal subunit protein uS15c (rps15) of Zygnema circumcarinatum (Green alga).